Reading from the N-terminus, the 135-residue chain is Agouti-signaling protein (135 aa).

The signal sequence occupies residues 1–22 (MNILRLLLATLLVCLCLLTAYS). Residue N39 is glycosylated (N-linked (GlcNAc...) asparagine). Positions 56-101 (NKKSKKISRKEAEKKRSSKKKASMKNVAQPRRPRPPPPAPCVATRD) are disordered. 5 disulfides stabilise this stretch: C96/C111, C103/C117, C110/C128, C114/C135, and C119/C126. The Agouti domain occupies 96–135 (CVATRDSCKPPAPACCDPCASCQCRFFRSSCSCRVLNPTC).

The protein localises to the secreted. Its function is as follows. Involved in the regulation of melanogenesis. The binding of ASP to MC1R precludes alpha-MSH initiated signaling and thus blocks production of cAMP, leading to a down-regulation of eumelanogenesis (brown/black pigment) and thus increasing synthesis of pheomelanin (yellow/red pigment). In Felis catus (Cat), this protein is Agouti-signaling protein (ASIP).